The primary structure comprises 309 residues: Ribonuclease Z (309 aa).

H63, H65, D67, H68, H141, D208, and H266 together coordinate Zn(2+). The active-site Proton acceptor is D67.

It belongs to the RNase Z family. In terms of assembly, homodimer. It depends on Zn(2+) as a cofactor.

The enzyme catalyses Endonucleolytic cleavage of RNA, removing extra 3' nucleotides from tRNA precursor, generating 3' termini of tRNAs. A 3'-hydroxy group is left at the tRNA terminus and a 5'-phosphoryl group is left at the trailer molecule.. Its function is as follows. Zinc phosphodiesterase, which displays some tRNA 3'-processing endonuclease activity. Probably involved in tRNA maturation, by removing a 3'-trailer from precursor tRNA. The protein is Ribonuclease Z of Salinispora arenicola (strain CNS-205).